The chain runs to 47 residues: Putative beta-neurotoxin (47 aa).

The LCN-type CS-alpha/beta domain maps to 1 to 47; the sequence is KEGYMGSDGCKMSCVINDQFCDTECQAKLKGSTGYCYFXGLACYXXG. Intrachain disulfides connect Cys14-Cys36 and Cys21-Cys43.

As to expression, expressed by the venom gland.

The protein localises to the secreted. In terms of biological role, causes transient paralysis of the rear legs of and spasms in insects (A.domestica). This Rhopalurus junceus (Caribbean blue scorpion) protein is Putative beta-neurotoxin.